The sequence spans 238 residues: Large ribosomal subunit protein uL1 (238 aa).

It belongs to the universal ribosomal protein uL1 family. In terms of assembly, part of the 50S ribosomal subunit.

Binds directly to 23S rRNA. The L1 stalk is quite mobile in the ribosome, and is involved in E site tRNA release. Its function is as follows. Protein L1 is also a translational repressor protein, it controls the translation of the L11 operon by binding to its mRNA. The chain is Large ribosomal subunit protein uL1 from Gloeobacter violaceus (strain ATCC 29082 / PCC 7421).